The chain runs to 383 residues: tRNA (adenine(58)-N(1))-methyltransferase catalytic subunit TRM61 (383 aa).

S-adenosyl-L-methionine-binding positions include Val-94, 121 to 124, Glu-139, Arg-144, 168 to 169, and Asp-203; these read SGSF and DV. Ser-302 bears the Phosphoserine mark.

This sequence belongs to the class I-like SAM-binding methyltransferase superfamily. TRM61 family. Heterotetramer; composed of two copies of TRM6/GCD10 and two copies of TRM61/GCD14.

It localises to the nucleus. It carries out the reaction adenosine(58) in tRNA + S-adenosyl-L-methionine = N(1)-methyladenosine(58) in tRNA + S-adenosyl-L-homocysteine + H(+). Functionally, catalytic subunit of tRNA (adenine-N(1)-)-methyltransferase, which catalyzes the formation of N(1)-methyladenine at position 58 (m1A58) in initiator methionyl-tRNA. GCD14 is also required for repression of GCN4 mRNA translation by the upstream open reading frames (uORFs) under conditions of amino acid sufficiency. The protein is tRNA (adenine(58)-N(1))-methyltransferase catalytic subunit TRM61 (GCD14) of Saccharomyces cerevisiae (strain ATCC 204508 / S288c) (Baker's yeast).